The sequence spans 695 residues: GRB2-associated-binding protein 1 (695 aa).

Position 2 is an N-acetylserine (Ser-2). The PH domain occupies 5–116 (EVVCSGWLRK…WVRCICDICG (112 aa)). Positions 204 to 229 (AKPTFSETDCNDNVPSHQTPASSQSK) are disordered. A compositionally biased stretch (polar residues) spans 206–229 (PTFSETDCNDNVPSHQTPASSQSK). Phosphoserine occurs at positions 251, 253, 266, and 304. The interval 306 to 387 (SYDIPPTPGN…PAGMTPSRSN (82 aa)) is disordered. Positions 314–334 (GNTYQIPRTFPESTLGQSSKL) are enriched in polar residues. Thr-388 is subject to Phosphothreonine. 2 positions are modified to phosphoserine: Ser-403 and Ser-455. A disordered region spans residues 453–659 (PNSPPRQHSG…GSSMADERVD (207 aa)). Polar residues-rich tracts occupy residues 457–466 (PRQHSGSFTE) and 605–617 (FASN…SSPM). Phosphotyrosine is present on Tyr-628. Phosphothreonine is present on Thr-639. A Phosphoserine modification is found at Ser-652. At Tyr-660 the chain carries Phosphotyrosine. The disordered stretch occupies residues 671 to 695 (LKSTREAWTDGRQSTESETPTKNVK). A compositionally biased stretch (basic and acidic residues) spans 673-685 (STREAWTDGRQST). Phosphoserine is present on Ser-684. A compositionally biased stretch (polar residues) spans 686-695 (ESETPTKNVK).

The protein belongs to the GAB family. As to quaternary structure, identified in a complex containing FRS2, GRB2, GAB1, PIK3R1 and SOS1. Forms a tripartite complex containing GAB1, METTL13 and SPRY2. Within the complex interacts with METTL13. Interacts with GRB2 and with other SH2-containing proteins. Interacts with phosphorylated LAT2. Interacts with PTPRJ. Interacts (phosphorylated) with PTPN11. Interacts with HCK. Post-translationally, phosphorylated on tyrosine residue(s) by the epidermal growth factor receptor (EGFR) and the insulin receptor (INSR). Tyrosine phosphorylation of GAB1 mediates interaction with several proteins that contain SH2 domains. Phosphorylated on tyrosine residues by HCK upon IL6 signaling. Phosphorylated in response to FGFR1 activation. Expressed in the inner ear (at protein level). Expression is detected in the cochlear duct, spiral limbus region, efferent and afferent nerves, and in spiral ganglion neurons (at protein level).

In terms of biological role, adapter protein that plays a role in intracellular signaling cascades triggered by activated receptor-type kinases. Plays a role in FGFR1 signaling. Probably involved in signaling by the epidermal growth factor receptor (EGFR) and the insulin receptor (INSR). Involved in the MET/HGF-signaling pathway. The polypeptide is GRB2-associated-binding protein 1 (Gab1) (Mus musculus (Mouse)).